The sequence spans 115 residues: NADH-ubiquinone oxidoreductase chain 3 (115 aa).

Transmembrane regions (helical) follow at residues F3–W23, F55–L75, and L84–Y104.

It belongs to the complex I subunit 3 family. As to quaternary structure, core subunit of respiratory chain NADH dehydrogenase (Complex I) which is composed of 45 different subunits. Interacts with TMEM186. Interacts with TMEM242.

It is found in the mitochondrion inner membrane. It catalyses the reaction a ubiquinone + NADH + 5 H(+)(in) = a ubiquinol + NAD(+) + 4 H(+)(out). Its function is as follows. Core subunit of the mitochondrial membrane respiratory chain NADH dehydrogenase (Complex I) which catalyzes electron transfer from NADH through the respiratory chain, using ubiquinone as an electron acceptor. Essential for the catalytic activity of complex I. In Pongo abelii (Sumatran orangutan), this protein is NADH-ubiquinone oxidoreductase chain 3.